We begin with the raw amino-acid sequence, 518 residues long: Zinc finger protein 776 (518 aa).

In terms of domain architecture, KRAB spans 14 to 89; the sequence is VTFEDVAVNF…HWTGVCTKKV (76 aa). Residues Lys171, Lys196, Lys220, and Lys247 each participate in a glycyl lysine isopeptide (Lys-Gly) (interchain with G-Cter in SUMO2) cross-link. The segment at 208–230 adopts a C2H2-type 1; degenerate zinc-finger fold; the sequence is YICGESTIPFSNKHSLVLHQRLL. A C2H2-type 2; degenerate zinc finger spans residues 236-258; the sequence is YVCSDSGKFTSKSNSFNNHQGVR. 7 consecutive C2H2-type zinc fingers follow at residues 264–286, 292–314, 320–342, 348–370, 376–398, 404–426, and 432–454; these read YQCGQCDESFWYKAHLTEHQRVH, YECGECDKSFSHKHSLVDHQRVH, YECDECGKSFSHKRSLVHHQRVH, YQCGECGKSFNHKCNLIQHQRVH, FECTACGKLFRSNSHLKEHQRVH, YECKECRKSFRYKSHLTEHQRVH, and YECRECGKCFHQKGSLIQHQQIH. A C2H2-type 10; degenerate zinc finger spans residues 460–482; that stretch reads HECGECGKCFHQKGSLIRHQQIH. The C2H2-type 11 zinc finger occupies 488–510; it reads HECGECGKCFRQKGNLIKHQRVH.

It belongs to the krueppel C2H2-type zinc-finger protein family.

It is found in the nucleus. In terms of biological role, may be involved in transcriptional regulation. The polypeptide is Zinc finger protein 776 (ZNF776) (Homo sapiens (Human)).